Here is a 244-residue protein sequence, read N- to C-terminus: ATP synthase subunit a (244 aa).

6 consecutive transmembrane segments (helical) span residues 25-45 (ISFTNASLFMVISSLAILLIF), 85-105 (YFAFIFSIFMFVLFCNMFGMI), 115-135 (IIVTFILASFIFVGVTIIGFM), 144-164 (LFVPSGVPAVLLPLIVVIEII), 193-213 (GFVISLGIVGGWLPLSFSVAL), and 216-236 (LEILVAFLQAYVFAILTCIYL).

Belongs to the ATPase A chain family. As to quaternary structure, F-type ATPases have 2 components, CF(1) - the catalytic core - and CF(0) - the membrane proton channel. CF(1) has five subunits: alpha(3), beta(3), gamma(1), delta(1), epsilon(1). CF(0) has three main subunits: a(1), b(2) and c(9-12). The alpha and beta chains form an alternating ring which encloses part of the gamma chain. CF(1) is attached to CF(0) by a central stalk formed by the gamma and epsilon chains, while a peripheral stalk is formed by the delta and b chains.

The protein localises to the cell inner membrane. In terms of biological role, key component of the proton channel; it plays a direct role in the translocation of protons across the membrane. In Pelagibacter ubique (strain HTCC1062), this protein is ATP synthase subunit a.